Here is a 118-residue protein sequence, read N- to C-terminus: Ribonuclease P protein component (118 aa).

It belongs to the RnpA family. As to quaternary structure, consists of a catalytic RNA component (M1 or rnpB) and a protein subunit.

It carries out the reaction Endonucleolytic cleavage of RNA, removing 5'-extranucleotides from tRNA precursor.. In terms of biological role, RNaseP catalyzes the removal of the 5'-leader sequence from pre-tRNA to produce the mature 5'-terminus. It can also cleave other RNA substrates such as 4.5S RNA. The protein component plays an auxiliary but essential role in vivo by binding to the 5'-leader sequence and broadening the substrate specificity of the ribozyme. The sequence is that of Ribonuclease P protein component from Petrotoga mobilis (strain DSM 10674 / SJ95).